We begin with the raw amino-acid sequence, 270 residues long: UPF0354 protein Bcer98_3354 (270 aa).

The protein belongs to the UPF0354 family.

The protein is UPF0354 protein Bcer98_3354 of Bacillus cytotoxicus (strain DSM 22905 / CIP 110041 / 391-98 / NVH 391-98).